The following is a 213-amino-acid chain: RPW8-like protein 3 (213 aa).

Residues 1 to 153 (MPVSEIMAGA…ITRQPTDCIC (153 aa)) form the RPW8 domain. Residues 7–23 (MAGAALGLALQVLHDAI) form a helical membrane-spanning segment. 2 coiled-coil regions span residues 70–93 (EDLK…RRRN) and 125–147 (VDIK…ITRQ). The N-linked (GlcNAc...) asparagine glycan is linked to asparagine 157.

It belongs to the plant RPW8 protein family.

The protein localises to the membrane. Its function is as follows. Probable disease resistance (R) protein. The sequence is that of RPW8-like protein 3 from Arabidopsis thaliana (Mouse-ear cress).